Reading from the N-terminus, the 506-residue chain is Cationic amino acid transporter 8 (506 aa).

N2 and N5 each carry an N-linked (GlcNAc...) asparagine glycan. A helical membrane pass occupies residues 38-58 (FYLLLIIIIYTATSACIYFDW). The N-linked (GlcNAc...) asparagine glycan is linked to N75. The next 5 helical transmembrane spans lie at 93 to 113 (NLYP…GFLY), 116 to 136 (IGPK…WIFL), 147 to 167 (LIGF…ILTV), 174 to 194 (ISTF…AVPA), and 211 to 231 (ICYG…TFLL). N277 carries N-linked (GlcNAc...) asparagine glycosylation. The chain crosses the membrane as a helical span at residues 302-322 (ILLFFKVLLSYPSICIIVYFI). N-linked (GlcNAc...) asparagine glycans are attached at residues N325 and N342. Transmembrane regions (helical) follow at residues 344 to 364 (SIIN…IIFG), 372 to 392 (AAII…TALI), 399 to 419 (LISA…IYCF), and 427 to 447 (VVFG…SLFC). 2 N-linked (GlcNAc...) asparagine glycosylation sites follow: N453 and N456. Residues 466–486 (TISILLAISFIIMFLPLSILY) traverse the membrane as a helical segment.

Belongs to the SLC43A transporter (TC 2.A.1.44) family.

Its subcellular location is the cell membrane. Its function is as follows. Cationic amino acid transporter which transports L-arginine, L-lysine and, to a lesser extent, L-histidine and ornithine. Plays an essential role in gametogenesis. The chain is Cationic amino acid transporter 8 from Plasmodium berghei (strain Anka).